The sequence spans 135 residues: Small ribosomal subunit protein uS9 (135 aa).

The protein belongs to the universal ribosomal protein uS9 family.

This chain is Small ribosomal subunit protein uS9 (rps9), found in Archaeoglobus fulgidus (strain ATCC 49558 / DSM 4304 / JCM 9628 / NBRC 100126 / VC-16).